The primary structure comprises 319 residues: Ribonucleoside-diphosphate reductase small chain (319 aa).

Residues 313–319 (FSLDVDF) form an interaction with R1 region.

The protein belongs to the ribonucleoside diphosphate reductase small chain family. Interacts with RNR1/OPG080 subunit. Can interact with host RNR1 supunit. Fe cation serves as cofactor.

The catalysed reaction is a 2'-deoxyribonucleoside 5'-diphosphate + [thioredoxin]-disulfide + H2O = a ribonucleoside 5'-diphosphate + [thioredoxin]-dithiol. Functionally, ribonucleoside-diphosphate reductase holoenzyme provides the precursors necessary for viral DNA synthesis. Allows virus growth in non-dividing cells. Catalyzes the biosynthesis of deoxyribonucleotides from the corresponding ribonucleotides. This Cynomys gunnisoni (Gunnison's prairie dog) protein is Ribonucleoside-diphosphate reductase small chain (OPG048).